Consider the following 271-residue polypeptide: L-aspartate dehydrogenase (271 aa).

Residues alanine 124 and asparagine 192 each coordinate NAD(+). Histidine 222 is an active-site residue.

The protein belongs to the L-aspartate dehydrogenase family.

It catalyses the reaction L-aspartate + NADP(+) + H2O = oxaloacetate + NH4(+) + NADPH + H(+). The catalysed reaction is L-aspartate + NAD(+) + H2O = oxaloacetate + NH4(+) + NADH + H(+). It participates in cofactor biosynthesis; NAD(+) biosynthesis; iminoaspartate from L-aspartate (dehydrogenase route): step 1/1. Its function is as follows. Specifically catalyzes the NAD or NADP-dependent dehydrogenation of L-aspartate to iminoaspartate. This chain is L-aspartate dehydrogenase, found in Methanococcoides burtonii (strain DSM 6242 / NBRC 107633 / OCM 468 / ACE-M).